We begin with the raw amino-acid sequence, 520 residues long: GMP synthase [glutamine-hydrolyzing] (520 aa).

The region spanning 13–205 (KIIVLDYGSQ…ALNICKAKGD (193 aa)) is the Glutamine amidotransferase type-1 domain. Cys-90 acts as the Nucleophile in catalysis. Active-site residues include His-179 and Glu-181. The GMPS ATP-PPase domain occupies 206–395 (WSMDNFIDMQ…LGMPDHIVWR (190 aa)). 233-239 (SGGVDSS) is an ATP binding site.

Homodimer.

It carries out the reaction XMP + L-glutamine + ATP + H2O = GMP + L-glutamate + AMP + diphosphate + 2 H(+). It functions in the pathway purine metabolism; GMP biosynthesis; GMP from XMP (L-Gln route): step 1/1. In terms of biological role, catalyzes the synthesis of GMP from XMP. The chain is GMP synthase [glutamine-hydrolyzing] from Streptococcus pneumoniae (strain CGSP14).